The sequence spans 314 residues: Olfactory receptor 5B12 (314 aa).

Over 1-23 (MENNTEVTEFILVGLTDDPELQI) the chain is Extracellular. Residue Asn-3 is glycosylated (N-linked (GlcNAc...) asparagine). The chain crosses the membrane as a helical span at residues 24-44 (PLFIVFLFIYLITLVGNLGMI). Residues 45–52 (ELILLDSC) are Cytoplasmic-facing. Residues 53–73 (LHTPMYFFLSNLSLVDFGYSS) form a helical membrane-spanning segment. The Extracellular portion of the chain corresponds to 74–97 (AVTPKVMVGFLTGDKFILYNACAT). Residues Cys-95 and Cys-187 are joined by a disulfide bond. The helical transmembrane segment at 98-118 (QFFFFVAFITAESFLLASMAY) threads the bilayer. Over 119–137 (DRYAALCKPLHYTTTMTTN) the chain is Cytoplasmic. A helical transmembrane segment spans residues 138–158 (VCACLAIGSYICGFLNASIHT). Over 159–194 (GNTFRLSFCRSNVVEHFFCDAPPLLTLSCSDNYISE) the chain is Extracellular. Residues 195–215 (MVIFFVVGFNDLFSILVILIS) traverse the membrane as a helical segment. The Cytoplasmic portion of the chain corresponds to 216 to 235 (YLFIFITIMKMRSPEGRQKA). Residues 236–256 (FSTCASHLTAVSIFYGTGIFM) traverse the membrane as a helical segment. Over 257 to 269 (YLRPNSSHFMGTD) the chain is Extracellular. An N-linked (GlcNAc...) asparagine glycan is attached at Asn-261. The helical transmembrane segment at 270–290 (KMASVFYAIVIPMLNPLVYSL) threads the bilayer. Over 291 to 314 (RNKEVKSAFKKTVGKAKASIGFIF) the chain is Cytoplasmic.

The protein belongs to the G-protein coupled receptor 1 family.

Its subcellular location is the cell membrane. Odorant receptor. The protein is Olfactory receptor 5B12 (OR5B12) of Homo sapiens (Human).